The chain runs to 154 residues: Endoribonuclease YbeY (154 aa).

3 residues coordinate Zn(2+): His117, His121, and His127.

It belongs to the endoribonuclease YbeY family. It depends on Zn(2+) as a cofactor.

It is found in the cytoplasm. Functionally, single strand-specific metallo-endoribonuclease involved in late-stage 70S ribosome quality control and in maturation of the 3' terminus of the 16S rRNA. The polypeptide is Endoribonuclease YbeY (Mycoplasma pneumoniae (strain ATCC 29342 / M129 / Subtype 1) (Mycoplasmoides pneumoniae)).